A 179-amino-acid polypeptide reads, in one-letter code: MPLTEVVLVDENDKPTGVMEKQEAHVKGELHRAITVYIFNSRQQLLLQQRAEEKYHSGGLWSNTCCSHPAPGEETLQAAHRRLYEEMGLRCALTPMFTLTYRLQLDNGLIEHELGHVYFGVTDDVPQINPDEVSSYEYQSIDEITQRMMMTPEQFTAWFQLTFARIPDYWQAFKSEQSR.

Residues H25 and H31 each coordinate Mn(2+). Residues E29 to L161 form the Nudix hydrolase domain. C66 is a catalytic residue. Residue C66 coordinates Mg(2+). H68 contacts Mn(2+). E86 lines the Mg(2+) pocket. The Mn(2+) site is built by E111 and E113. E113 is a catalytic residue.

Belongs to the IPP isomerase type 1 family. In terms of assembly, homodimer. Mg(2+) serves as cofactor. The cofactor is Mn(2+).

Its subcellular location is the cytoplasm. It catalyses the reaction isopentenyl diphosphate = dimethylallyl diphosphate. It participates in isoprenoid biosynthesis; dimethylallyl diphosphate biosynthesis; dimethylallyl diphosphate from isopentenyl diphosphate: step 1/1. Its function is as follows. Catalyzes the 1,3-allylic rearrangement of the homoallylic substrate isopentenyl (IPP) to its highly electrophilic allylic isomer, dimethylallyl diphosphate (DMAPP). The protein is Isopentenyl-diphosphate Delta-isomerase of Pectobacterium atrosepticum (strain SCRI 1043 / ATCC BAA-672) (Erwinia carotovora subsp. atroseptica).